A 175-amino-acid polypeptide reads, in one-letter code: SKP1-like protein 20 (175 aa).

The segment at 117-175 is interaction with the F-box domain of F-box proteins; it reads ILAANYLNIKGLLDLTCQTVADMIKGKTPEEIRKTFNIKNDFTPEEEEEVRRENQWAFE.

It belongs to the SKP1 family. Part of a SCF (SKP1-CUL1-F-box protein) E3 ubiquitin-protein ligase complex. Interacts with rice black streaked dwarf virus RBSDV protein P7-2. Is able to form the SCF complex together with CUL1 and the viral P7-2 protein. Interacts with D3.

The protein resides in the nucleus. Its pathway is protein modification; protein ubiquitination. In terms of biological role, involved in ubiquitination and subsequent proteasomal degradation of target proteins. Together with CUL1, a RING-box and a F-box protein, it forms a SCF E3 ubiquitin ligase complex. The functional specificity of this complex depends on the type of F-box protein. In the SCF complex, it serves as an adapter that links the F-box protein to CUL1. The protein is SKP1-like protein 20 of Oryza sativa subsp. japonica (Rice).